The sequence spans 614 residues: MSQIETKEFQTEIRQLLDIVINSLYTDREIFLRELISNAADASEKVRYMQLSGQNVKDQELPLEIRITPDENAKTLTIADAGIGMTKEDLIENIGTIAHSGSKAFVQRLAEAGDKKDVNLIGQFGVGFYSAFMVADKVSLTSRSYEPDAQGYRWESDGRGSYSISEEMDLPRGTSITLHLKEDAHSFAQADTVKRIIKQYSSFVPYPVYVGEEKINTVQALWTKNKNEISEEEYKEFYKYIANAYDEPLMRMHFSSDAPINLNALLFVPKSNMEKFGFGRMEAGVNLYCKKVLIQEKAKDIVPEWLRFARGVVDSEELPLNISRETMQDSALIAKLNKVVTSRFLKFLDDQAKNEPEIFKEFWNEFSIFLKEGAANDFTHRQEILKLLRFESSKTGEGELISLGDYVGRMKEGQEAIYFINGPTRQIIEEGPYLEVFKNKDYEVIYTYDGIDDYVFDMIREYDGKRLLSADHGDLNLADEDGASAEEKLLSEEELKEFNDWLKEVLGEKVTEVRESKRLVDSPAIILSHYGTHSMQRMMQLMNRDLQDVPAGILEINPKHVLIQRLNDLRKQEDSFAPLAAEQLFANAQIAAGIIVDPRSMVSRLNEILEKALR.

An a; substrate-binding region spans residues 1-324; sequence MSQIETKEFQ…SEELPLNISR (324 aa). Residues 325-537 form a b region; that stretch reads ETMQDSALIA…SHYGTHSMQR (213 aa). The interval 538–614 is c; it reads MMQLMNRDLQ…LNEILEKALR (77 aa).

It belongs to the heat shock protein 90 family. Homodimer.

The protein localises to the cytoplasm. Functionally, molecular chaperone. Has ATPase activity. The sequence is that of Chaperone protein HtpG from Desulfitobacterium hafniense (strain Y51).